The chain runs to 293 residues: Small ribosomal subunit biogenesis GTPase RsgA (293 aa).

Residues 63 to 223 form the CP-type G domain; sequence QNELVRPPIA…VADTPGFSAL (161 aa). GTP contacts are provided by residues 112–115 and 166–174; these read SKID and GQSGVGKSS. Residues C247, C252, H254, and C260 each contribute to the Zn(2+) site.

This sequence belongs to the TRAFAC class YlqF/YawG GTPase family. RsgA subfamily. In terms of assembly, monomer. Associates with 30S ribosomal subunit, binds 16S rRNA. Requires Zn(2+) as cofactor.

It is found in the cytoplasm. One of several proteins that assist in the late maturation steps of the functional core of the 30S ribosomal subunit. Helps release RbfA from mature subunits. May play a role in the assembly of ribosomal proteins into the subunit. Circularly permuted GTPase that catalyzes slow GTP hydrolysis, GTPase activity is stimulated by the 30S ribosomal subunit. This is Small ribosomal subunit biogenesis GTPase RsgA from Geobacillus kaustophilus (strain HTA426).